Here is a 157-residue protein sequence, read N- to C-terminus: uncharacterized protein (157 aa).

An N-acetyltransferase domain is found at 9–154 (LLINYKTLDE…ETNLNAVTNE (146 aa)).

This is an uncharacterized protein from Bacillus cereus (strain G9842).